The primary structure comprises 417 residues: uncharacterized protein (417 aa).

This sequence to M.tuberculosis Rv2067c.

This is an uncharacterized protein from Synechococcus sp. (strain ATCC 27144 / PCC 6301 / SAUG 1402/1) (Anacystis nidulans).